We begin with the raw amino-acid sequence, 281 residues long: Bifunctional protein FolD (281 aa).

NADP(+) is bound by residues 165–167, Thr-192, and Val-233; that span reads GRG.

It belongs to the tetrahydrofolate dehydrogenase/cyclohydrolase family. Homodimer.

The catalysed reaction is (6R)-5,10-methylene-5,6,7,8-tetrahydrofolate + NADP(+) = (6R)-5,10-methenyltetrahydrofolate + NADPH. It catalyses the reaction (6R)-5,10-methenyltetrahydrofolate + H2O = (6R)-10-formyltetrahydrofolate + H(+). It functions in the pathway one-carbon metabolism; tetrahydrofolate interconversion. Functionally, catalyzes the oxidation of 5,10-methylenetetrahydrofolate to 5,10-methenyltetrahydrofolate and then the hydrolysis of 5,10-methenyltetrahydrofolate to 10-formyltetrahydrofolate. The protein is Bifunctional protein FolD of Mycobacterium avium (strain 104).